We begin with the raw amino-acid sequence, 111 residues long: Nucleoid-associated protein LBA0378 (111 aa).

It belongs to the YbaB/EbfC family. Homodimer.

Its subcellular location is the cytoplasm. The protein localises to the nucleoid. Binds to DNA and alters its conformation. May be involved in regulation of gene expression, nucleoid organization and DNA protection. This is Nucleoid-associated protein LBA0378 from Lactobacillus acidophilus (strain ATCC 700396 / NCK56 / N2 / NCFM).